Consider the following 44-residue polypeptide: Antifungal protein R (44 aa).

Belongs to the thaumatin family.

Has antifungal activity. Inhibits the growth of Trichoderma viridae and Candida albicans. The chain is Antifungal protein R from Hordeum vulgare (Barley).